The following is a 393-amino-acid chain: NAD(P)H-quinone oxidoreductase subunit H, chloroplastic (393 aa).

This sequence belongs to the complex I 49 kDa subunit family. As to quaternary structure, NDH is composed of at least 16 different subunits, 5 of which are encoded in the nucleus.

Its subcellular location is the plastid. The protein localises to the chloroplast thylakoid membrane. It catalyses the reaction a plastoquinone + NADH + (n+1) H(+)(in) = a plastoquinol + NAD(+) + n H(+)(out). It carries out the reaction a plastoquinone + NADPH + (n+1) H(+)(in) = a plastoquinol + NADP(+) + n H(+)(out). Its function is as follows. NDH shuttles electrons from NAD(P)H:plastoquinone, via FMN and iron-sulfur (Fe-S) centers, to quinones in the photosynthetic chain and possibly in a chloroplast respiratory chain. The immediate electron acceptor for the enzyme in this species is believed to be plastoquinone. Couples the redox reaction to proton translocation, and thus conserves the redox energy in a proton gradient. The polypeptide is NAD(P)H-quinone oxidoreductase subunit H, chloroplastic (Morus indica (Mulberry)).